Reading from the N-terminus, the 224-residue chain is Ribose-5-phosphate isomerase A 1 (224 aa).

Residues 29–32 (SGST), 85–88 (DGAD), and 98–101 (KGGG) each bind substrate. Glu107 functions as the Proton acceptor in the catalytic mechanism. Lys125 provides a ligand contact to substrate.

The protein belongs to the ribose 5-phosphate isomerase family. Homodimer.

The catalysed reaction is aldehydo-D-ribose 5-phosphate = D-ribulose 5-phosphate. It participates in carbohydrate degradation; pentose phosphate pathway; D-ribose 5-phosphate from D-ribulose 5-phosphate (non-oxidative stage): step 1/1. Functionally, catalyzes the reversible conversion of ribose-5-phosphate to ribulose 5-phosphate. The polypeptide is Ribose-5-phosphate isomerase A 1 (Oceanobacillus iheyensis (strain DSM 14371 / CIP 107618 / JCM 11309 / KCTC 3954 / HTE831)).